The chain runs to 180 residues: Large ribosomal subunit protein uL5 (180 aa).

It belongs to the universal ribosomal protein uL5 family. As to quaternary structure, part of the 50S ribosomal subunit; part of the 5S rRNA/L5/L18/L25 subcomplex. Contacts the 5S rRNA and the P site tRNA. Forms a bridge to the 30S subunit in the 70S ribosome.

This is one of the proteins that bind and probably mediate the attachment of the 5S RNA into the large ribosomal subunit, where it forms part of the central protuberance. In the 70S ribosome it contacts protein S13 of the 30S subunit (bridge B1b), connecting the 2 subunits; this bridge is implicated in subunit movement. Contacts the P site tRNA; the 5S rRNA and some of its associated proteins might help stabilize positioning of ribosome-bound tRNAs. The protein is Large ribosomal subunit protein uL5 of Ralstonia nicotianae (strain ATCC BAA-1114 / GMI1000) (Ralstonia solanacearum).